The chain runs to 164 residues: Phosphopantetheine adenylyltransferase (164 aa).

Position 10 (S10) interacts with substrate. ATP contacts are provided by residues 10 to 11 (SF) and H18. Substrate is bound by residues K42, L74, and R88. ATP-binding positions include 89–91 (GLR), E99, and 124–130 (YSFLSSS).

This sequence belongs to the bacterial CoaD family. Homohexamer. Mg(2+) is required as a cofactor.

The protein resides in the cytoplasm. It catalyses the reaction (R)-4'-phosphopantetheine + ATP + H(+) = 3'-dephospho-CoA + diphosphate. It participates in cofactor biosynthesis; coenzyme A biosynthesis; CoA from (R)-pantothenate: step 4/5. Reversibly transfers an adenylyl group from ATP to 4'-phosphopantetheine, yielding dephospho-CoA (dPCoA) and pyrophosphate. This Exiguobacterium sp. (strain ATCC BAA-1283 / AT1b) protein is Phosphopantetheine adenylyltransferase.